A 95-amino-acid polypeptide reads, in one-letter code: MQLNITGHNVEITPAMRDFVTAKFSKLEQFFDRINQVYIVLKVEKVTQIADANLHVNGGEIHASAEGQDMYAAIDGLIDKLARQLTKHKDKLKQH.

Belongs to the HPF/YfiA ribosome-associated protein family. Short HPF subfamily. Associates exclusively with 100S ribosomes, which are dimers of 70S ribosomes.

Its function is as follows. During stationary phase, promotes and stabilizes dimerization of 70S ribosomes by the ribosome modulation factor (RMF), leading to the formation of inactive 100S ribosomes. This Klebsiella oxytoca protein is Ribosome hibernation promoting factor (hpf).